Consider the following 195-residue polypeptide: dITP/XTP pyrophosphatase (195 aa).

8-13 (TNNQGK) is a substrate binding site. Mg(2+) is bound by residues E39 and D68. The active-site Proton acceptor is the D68. Residues S69, 149–152 (FGYD), K172, and 177–178 (HR) each bind substrate.

The protein belongs to the HAM1 NTPase family. As to quaternary structure, homodimer. The cofactor is Mg(2+).

The enzyme catalyses XTP + H2O = XMP + diphosphate + H(+). It carries out the reaction dITP + H2O = dIMP + diphosphate + H(+). The catalysed reaction is ITP + H2O = IMP + diphosphate + H(+). Pyrophosphatase that catalyzes the hydrolysis of nucleoside triphosphates to their monophosphate derivatives, with a high preference for the non-canonical purine nucleotides XTP (xanthosine triphosphate), dITP (deoxyinosine triphosphate) and ITP. Seems to function as a house-cleaning enzyme that removes non-canonical purine nucleotides from the nucleotide pool, thus preventing their incorporation into DNA/RNA and avoiding chromosomal lesions. The polypeptide is dITP/XTP pyrophosphatase (Staphylococcus epidermidis (strain ATCC 12228 / FDA PCI 1200)).